The chain runs to 248 residues: ATP synthase subunit a, chloroplastic (248 aa).

Helical transmembrane passes span 37 to 57 (GQVLITSWVVIGILLTVAFLG), 96 to 116 (VPFVGTLFLFIFVSNWSGALV), 135 to 155 (INTTVALALLTSGAYFYAGFH), 200 to 220 (LVVAVLVSLVPLVVPIPMMFL), and 221 to 241 (GLFTSGIQALIFATLAAAYIG).

This sequence belongs to the ATPase A chain family. In terms of assembly, F-type ATPases have 2 components, CF(1) - the catalytic core - and CF(0) - the membrane proton channel. CF(1) has five subunits: alpha(3), beta(3), gamma(1), delta(1), epsilon(1). CF(0) has four main subunits: a, b, b' and c.

Its subcellular location is the plastid. It localises to the chloroplast thylakoid membrane. Key component of the proton channel; it plays a direct role in the translocation of protons across the membrane. This is ATP synthase subunit a, chloroplastic from Staurastrum punctulatum (Green alga).